The sequence spans 244 residues: Cell adhesion molecule CEACAM4 (244 aa).

An N-terminal signal peptide occupies residues 1–35; that stretch reads MGPPSAAPRGGHRPWQGLLITASLLTFWHPPTTVQ. The Ig-like V-type domain maps to 36-139; it reads FTIEALPSSA…DSDQATGQLH (104 aa). Residues 36-155 lie on the Extracellular side of the membrane; the sequence is FTIEALPSSA…PGLPVGAVAG (120 aa). Residues asparagine 57, asparagine 104, asparagine 111, and asparagine 126 are each glycosylated (N-linked (GlcNAc...) asparagine). Residues 156-176 form a helical membrane-spanning segment; sequence IVTGVLVGVALVAALVCFLLL. The Cytoplasmic portion of the chain corresponds to 177–244; that stretch reads SRTGRASIQR…QIDHKADVVS (68 aa). Residues 186–215 are disordered; the sequence is RDLREQPPPASTPGHGPSHRSTFSAPLPSP. Positions 222–236 match the ITAM motif; that stretch reads YEELLYSDANIYCQI.

The protein belongs to the immunoglobulin superfamily. CEA family. Interacts through its phosphorylated ITAM domain with the SH2 domain-containing cytoplasmic proteins involved in signaling processes during phagocytosis. In terms of processing, N-glycosylated. The cytoplasmic ITAM-like sequence becomes tyrosine phosphorylated by SRC family PTKs upon ligand-mediated receptor clustering and allows to initiate phagocytosis of bound ligand. In terms of tissue distribution, granulocytes.

The protein localises to the membrane. Granulocyte orphan receptor that acts as an trigger efficient phagocytosis of attached particles. The sequence is that of Cell adhesion molecule CEACAM4 from Homo sapiens (Human).